A 467-amino-acid polypeptide reads, in one-letter code: Cytochrome P450 85A3 (467 aa).

The helical transmembrane segment at 2 to 22 (AIFLIIFVVFFGFCILSTPLF) threads the bilayer. Cys-417 serves as a coordination point for heme.

This sequence belongs to the cytochrome P450 family. Heme serves as cofactor. In terms of tissue distribution, expressed in fruits.

The protein resides in the membrane. It catalyses the reaction 6-deoxocastasterone + reduced [NADPH--hemoprotein reductase] + O2 = 6alpha-hydroxycastasterone + oxidized [NADPH--hemoprotein reductase] + H2O + H(+). The catalysed reaction is 6alpha-hydroxycastasterone + reduced [NADPH--hemoprotein reductase] + O2 = castasterone + oxidized [NADPH--hemoprotein reductase] + 2 H2O + H(+). It carries out the reaction castasterone + reduced [NADPH--hemoprotein reductase] + O2 = brassinolide + oxidized [NADPH--hemoprotein reductase] + H2O + H(+). The enzyme catalyses 6-deoxocastasterone + 2 reduced [NADPH--hemoprotein reductase] + 2 O2 = castasterone + 2 oxidized [NADPH--hemoprotein reductase] + 3 H2O + 2 H(+). Its pathway is plant hormone biosynthesis; brassinosteroid biosynthesis. Functionally, catalyzes the C6-oxidation step in brassinosteroids biosynthesis. Converts 6-deoxocastasterone (6-deoxoCS) to castasterone (CS), and castasterone (CS) to brassinolide (BL). In Solanum lycopersicum (Tomato), this protein is Cytochrome P450 85A3.